A 165-amino-acid chain; its full sequence is uncharacterized protein (165 aa).

Residues 16 to 36 (ASISSILNFFFFYIMEYFVAV) form a helical membrane-spanning segment.

Belongs to the asfivirus F165R family.

It localises to the host membrane. This is an uncharacterized protein from Ornithodoros (relapsing fever ticks).